The following is an 838-amino-acid chain: U1 SNP1-associating protein 1 (838 aa).

Residues 1–536 are Cytoplasmic-facing; the sequence is MSEYLAQTPC…VRPLRNSFPL (536 aa). The interval 31 to 240 is required for ERAD-L function; sequence HPLSTVGRLL…DFAPAHNSFF (210 aa). The Ubiquitin-like domain maps to 259 to 318; that stretch reads ERFVLEFISDATLSITQMNVKPDTTVKQVKDFICSVYTHSLNLRRNDIKLIYKGQLLHEN. An important for HRD1 oligomer formation region spans residues 319–418; sequence NFAGNSSKIS…VPTDELYRKC (100 aa). The interval 345 to 535 is interaction with HRD1; it reads QEYTESGPGF…VVRPLRNSFP (191 aa). 3 positions are modified to phosphoserine: Ser-374, Ser-376, and Ser-379. A required for ERAD-L function and HRD1 oligomer formation region spans residues 437–490; it reads SSYLSVIKGDYGEIKIPISSNDYRINGDNILLSPSAIEQLESALNFKIERPRDS. The helical transmembrane segment at 537–559 threads the bilayer; the sequence is LLVLIRTFYLIGYNSLVPFFIIL. The Extracellular segment spans residues 560-563; the sequence is EFGS. Residues 564 to 583 traverse the membrane as a helical segment; it reads FLPWKYIILLSLLFIFRTVW. At 584–838 the chain is on the cytoplasmic side; that stretch reads NTQEVWNLWR…QPHLYIPDED (255 aa). Positions 584-838 are interaction with DER1; the sequence is NTQEVWNLWR…QPHLYIPDED (255 aa). A disordered region spans residues 795–838; that stretch reads ARDREQPAPSAQQQENEDEALIIPDEEEPTATGAQPHLYIPDED. A compositionally biased stretch (acidic residues) spans 809–823; sequence ENEDEALIIPDEEEP.

Component of the HRD1 ubiquitin ligase complex which contains the E3 ligase HRD1, its cofactors HRD3, USA1 and DER1, substrate recruiting factor YOS9 and CDC48-binding protein UBX2. Within the complex, interacts directly with HRD1 (via N-terminus) and DER1 (via C-terminus) and indirectly with HRD3. In ERAD-L, HRD3 and YOS9 jointly bind misfolded glycoproteins in the endoplasmic reticulum (ER) lumen. Movement of ERAD-L substrates through the ER membrane is facilitated by HRD1 and DER1 which have lateral gates facing each other and which distort the membrane region between the lateral gates, making it much thinner than a normal phospholipid bilayer. Substrates insert into the membrane as a hairpin loop with one strand interacting with DER1 and the other with HRD1. The HRD1 complex interacts with the heterotrimeric CDC48-NPL4-UFD1 ATPase complex which is recruited by UBX2 via its interaction with CDC48 and which moves ubiquitinated substrates to the cytosol for targeting to the proteasome.

It localises to the endoplasmic reticulum membrane. Its function is as follows. Scaffold protein of the endoplasmic reticulum-associated degradation (ERAD) (also known as endoplasmic reticulum quality control, ERQC) pathway involved in ubiquitin-dependent degradation of misfolded endoplasmic reticulum proteins. Component of the HRD1 ubiquitin ligase complex, which is part of the ERAD-L and ERAD-M pathways responsible for the rapid degradation of soluble lumenal and membrane proteins with misfolded lumenal domains (ERAD-L), or ER-membrane proteins with misfolded transmembrane domains (ERAD-M). Has multiple functions in ERAD including recruitment of DER1 to the HRD1 ubiquitin ligase, and regulation of HRD1 activity. Involved in oligomerization of HRD1 and in HRD1 autoubiquitination and degradation. The sequence is that of U1 SNP1-associating protein 1 (USA1) from Saccharomyces cerevisiae (strain ATCC 204508 / S288c) (Baker's yeast).